Reading from the N-terminus, the 584-residue chain is Long-chain-fatty-acid--AMP ligase FadD23 (584 aa).

A run of 2 helical transmembrane segments spans residues 199–219 (YFAD…WLPF) and 225–245 (LVLG…TSPV).

This sequence belongs to the ATP-dependent AMP-binding enzyme family.

The protein resides in the membrane. The enzyme catalyses holo-[(hydroxy)phthioceranic acid synthase] + hexadecanoate + ATP = hexadecanoyl-[(hydroxy)phthioceranic acid synthase] + AMP + diphosphate. It carries out the reaction holo-[(hydroxy)phthioceranic acid synthase] + octadecanoate + ATP = octadecanoyl-[(hydroxy)phthioceranic acid synthase] + AMP + diphosphate. It participates in lipid metabolism; fatty acid biosynthesis. In terms of biological role, catalyzes the activation of long-chain fatty acids as acyl-adenylates (acyl-AMP), which are then transferred to the multifunctional polyketide synthase (PKS) type III for further chain extension. Involved in the biosynthesis of sulfolipid 1 (SL-1). The sequence is that of Long-chain-fatty-acid--AMP ligase FadD23 (fadD23) from Mycobacterium bovis (strain ATCC BAA-935 / AF2122/97).